Consider the following 1374-residue polypeptide: DNA-directed RNA polymerase subunit beta (1374 aa).

The protein belongs to the RNA polymerase beta chain family. As to quaternary structure, the RNAP catalytic core consists of 2 alpha, 1 beta, 1 beta' and 1 omega subunit. When a sigma factor is associated with the core the holoenzyme is formed, which can initiate transcription.

The catalysed reaction is RNA(n) + a ribonucleoside 5'-triphosphate = RNA(n+1) + diphosphate. Its function is as follows. DNA-dependent RNA polymerase catalyzes the transcription of DNA into RNA using the four ribonucleoside triphosphates as substrates. The polypeptide is DNA-directed RNA polymerase subunit beta (Acidovorax sp. (strain JS42)).